Reading from the N-terminus, the 133-residue chain is Small ribosomal subunit protein uS8 (133 aa).

The protein belongs to the universal ribosomal protein uS8 family. In terms of assembly, part of the 30S ribosomal subunit. Contacts proteins S5 and S12.

Its function is as follows. One of the primary rRNA binding proteins, it binds directly to 16S rRNA central domain where it helps coordinate assembly of the platform of the 30S subunit. This is Small ribosomal subunit protein uS8 from Chlorobaculum parvum (strain DSM 263 / NCIMB 8327) (Chlorobium vibrioforme subsp. thiosulfatophilum).